We begin with the raw amino-acid sequence, 233 residues long: Large ribosomal subunit protein uL1 (233 aa).

The protein belongs to the universal ribosomal protein uL1 family. As to quaternary structure, part of the 50S ribosomal subunit.

Its function is as follows. Binds directly to 23S rRNA. The L1 stalk is quite mobile in the ribosome, and is involved in E site tRNA release. Functionally, protein L1 is also a translational repressor protein, it controls the translation of the L11 operon by binding to its mRNA. This is Large ribosomal subunit protein uL1 from Photorhabdus laumondii subsp. laumondii (strain DSM 15139 / CIP 105565 / TT01) (Photorhabdus luminescens subsp. laumondii).